The following is a 430-amino-acid chain: Adenylosuccinate synthetase (430 aa).

Residues 17–23 (GDEGKGK) and 45–47 (GHT) contribute to the GTP site. Asp-18 serves as the catalytic Proton acceptor. Positions 18 and 45 each coordinate Mg(2+). Residues 18–21 (DEGK), 43–46 (NAGH), Thr-139, Arg-153, Asn-229, Thr-244, and Arg-308 each bind IMP. His-46 functions as the Proton donor in the catalytic mechanism. A substrate-binding site is contributed by 304–310 (TVTGRRR). GTP is bound by residues Arg-310, 336–338 (KLD), and 418–420 (GVG).

Belongs to the adenylosuccinate synthetase family. In terms of assembly, homodimer. Mg(2+) serves as cofactor.

Its subcellular location is the cytoplasm. It catalyses the reaction IMP + L-aspartate + GTP = N(6)-(1,2-dicarboxyethyl)-AMP + GDP + phosphate + 2 H(+). Its pathway is purine metabolism; AMP biosynthesis via de novo pathway; AMP from IMP: step 1/2. Functionally, plays an important role in the de novo pathway and in the salvage pathway of purine nucleotide biosynthesis. Catalyzes the first committed step in the biosynthesis of AMP from IMP. This Cryptococcus neoformans var. neoformans serotype D (strain JEC21 / ATCC MYA-565) (Filobasidiella neoformans) protein is Adenylosuccinate synthetase.